We begin with the raw amino-acid sequence, 297 residues long: Cytosolic Fe-S cluster assembly factor CFD1 (297 aa).

Residue 15–22 (GKGGVGKS) coordinates ATP. Residues Cys-216 and Cys-219 each coordinate [4Fe-4S] cluster.

The protein belongs to the Mrp/NBP35 ATP-binding proteins family. NUBP2/CFD1 subfamily. As to quaternary structure, heterotetramer of 2 NBP35 and 2 CFD1 chains. Requires [4Fe-4S] cluster as cofactor.

The protein localises to the cytoplasm. Component of the cytosolic iron-sulfur (Fe/S) protein assembly (CIA) machinery. Required for maturation of extramitochondrial Fe-S proteins. The NBP35-CFD1 heterotetramer forms a Fe-S scaffold complex, mediating the de novo assembly of an Fe-S cluster and its transfer to target apoproteins. This is Cytosolic Fe-S cluster assembly factor CFD1 from Phaeosphaeria nodorum (strain SN15 / ATCC MYA-4574 / FGSC 10173) (Glume blotch fungus).